A 441-amino-acid polypeptide reads, in one-letter code: Ribosomal protein uS12 methylthiotransferase RimO (441 aa).

One can recognise an MTTase N-terminal domain in the interval 8–118 (PKIGFVSLGC…VLEHVHHYVP (111 aa)). Residues C17, C53, C82, C150, C154, and C157 each coordinate [4Fe-4S] cluster. Residues 136-373 (LTPRHYAYLK…MQLQQQISAE (238 aa)) form the Radical SAM core domain. The TRAM domain occupies 376–441 (QEKVGREILV…DEYDLWGSRV (66 aa)).

Belongs to the methylthiotransferase family. RimO subfamily. It depends on [4Fe-4S] cluster as a cofactor.

The protein localises to the cytoplasm. The catalysed reaction is L-aspartate(89)-[ribosomal protein uS12]-hydrogen + (sulfur carrier)-SH + AH2 + 2 S-adenosyl-L-methionine = 3-methylsulfanyl-L-aspartate(89)-[ribosomal protein uS12]-hydrogen + (sulfur carrier)-H + 5'-deoxyadenosine + L-methionine + A + S-adenosyl-L-homocysteine + 2 H(+). Catalyzes the methylthiolation of an aspartic acid residue of ribosomal protein uS12. The polypeptide is Ribosomal protein uS12 methylthiotransferase RimO (Shigella flexneri).